Reading from the N-terminus, the 451-residue chain is UPF0210 protein lin0538 (451 aa).

It belongs to the UPF0210 family. In terms of assembly, homodimer.

The protein is UPF0210 protein lin0538 of Listeria innocua serovar 6a (strain ATCC BAA-680 / CLIP 11262).